The primary structure comprises 370 residues: GDSL esterase/lipase At1g33811 (370 aa).

A signal peptide spans Met-1–Ser-24. Ser-41 (nucleophile) is an active-site residue. 3 N-linked (GlcNAc...) asparagine glycosylation sites follow: Asn-203, Asn-241, and Asn-242. Catalysis depends on residues Asp-336 and His-339.

Belongs to the 'GDSL' lipolytic enzyme family.

It is found in the secreted. The polypeptide is GDSL esterase/lipase At1g33811 (Arabidopsis thaliana (Mouse-ear cress)).